We begin with the raw amino-acid sequence, 429 residues long: Aspartate--tRNA(Asp/Asn) ligase (429 aa).

Glu-166 provides a ligand contact to L-aspartate. The aspartate stretch occupies residues 188-191 (QLYK). L-aspartate is bound at residue Arg-210. Residues 210 to 212 (RAE), 218 to 220 (RHL), and Glu-352 each bind ATP. Mg(2+) is bound by residues Glu-352 and Ser-355. L-aspartate contacts are provided by Ser-355 and Arg-359. 400-403 (GIER) lines the ATP pocket.

It belongs to the class-II aminoacyl-tRNA synthetase family. Type 2 subfamily. Homodimer. It depends on Mg(2+) as a cofactor.

Its subcellular location is the cytoplasm. It catalyses the reaction tRNA(Asx) + L-aspartate + ATP = L-aspartyl-tRNA(Asx) + AMP + diphosphate. Aspartyl-tRNA synthetase with relaxed tRNA specificity since it is able to aspartylate not only its cognate tRNA(Asp) but also tRNA(Asn). Reaction proceeds in two steps: L-aspartate is first activated by ATP to form Asp-AMP and then transferred to the acceptor end of tRNA(Asp/Asn). The chain is Aspartate--tRNA(Asp/Asn) ligase from Methanoculleus marisnigri (strain ATCC 35101 / DSM 1498 / JR1).